The chain runs to 177 residues: UPF0316 protein STH2077 (177 aa).

A run of 2 helical transmembrane segments spans residues 9–29 and 41–61; these read AALD…VNTV and LASA…GLVV.

Belongs to the UPF0316 family.

It localises to the cell membrane. The sequence is that of UPF0316 protein STH2077 from Symbiobacterium thermophilum (strain DSM 24528 / JCM 14929 / IAM 14863 / T).